The primary structure comprises 65 residues: Large ribosomal subunit protein bL35 (65 aa).

Belongs to the bacterial ribosomal protein bL35 family.

This chain is Large ribosomal subunit protein bL35, found in Parabacteroides distasonis (strain ATCC 8503 / DSM 20701 / CIP 104284 / JCM 5825 / NCTC 11152).